A 383-amino-acid polypeptide reads, in one-letter code: Na(+)/H(+) antiporter NhaA (383 aa).

11 helical membrane-spanning segments follow: residues 10 to 30 (LIGGLILFSAALLAIVVNNSP), 56 to 76 (LMHWINDGLMAIYFLYIGLEI), 91 to 111 (IITPAIAAFAGLAMPSLIYLS), 121 to 141 (GWAIPSATDIAFTLAILALLG), 150 to 170 (LLVITIAIFDDIAAIAIIAIF), 174 to 194 (SLSLLSLSLGTLFILAMIICN), 206 to 226 (VVLGFFAWFCTIKSGVHATLA), 254 to 274 (PWIIYFILPVFAFANAGISFS), 289 to 308 (IIWGLFVGKQLGIFSILAVF), 327 to 347 (GISLLCGIGFTMSLFIGVLAF), and 355 to 375 (AIKIGVVVGSVLSGFFGYIVL).

It belongs to the NhaA Na(+)/H(+) (TC 2.A.33) antiporter family.

The protein resides in the cell inner membrane. It carries out the reaction Na(+)(in) + 2 H(+)(out) = Na(+)(out) + 2 H(+)(in). Its function is as follows. Na(+)/H(+) antiporter that extrudes sodium in exchange for external protons. The protein is Na(+)/H(+) antiporter NhaA of Francisella tularensis subsp. tularensis (strain WY96-3418).